A 406-amino-acid chain; its full sequence is Argininosuccinate synthase (406 aa).

ATP contacts are provided by residues 11–19 (AYSGGLDTS) and Ala38. The L-citrulline site is built by Tyr91 and Ser96. Gly121 is a binding site for ATP. The L-aspartate site is built by Thr123, Asn127, and Asp128. Asn127 provides a ligand contact to L-citrulline. Arg131, Ser181, Ser190, Glu266, and Tyr278 together coordinate L-citrulline.

The protein belongs to the argininosuccinate synthase family. Type 1 subfamily. As to quaternary structure, homotetramer.

It is found in the cytoplasm. It carries out the reaction L-citrulline + L-aspartate + ATP = 2-(N(omega)-L-arginino)succinate + AMP + diphosphate + H(+). Its pathway is amino-acid biosynthesis; L-arginine biosynthesis; L-arginine from L-ornithine and carbamoyl phosphate: step 2/3. In Campylobacter hominis (strain ATCC BAA-381 / DSM 21671 / CCUG 45161 / LMG 19568 / NCTC 13146 / CH001A), this protein is Argininosuccinate synthase.